The sequence spans 241 residues: LexA repressor (241 aa).

A DNA-binding region (H-T-H motif) is located at residues 26 to 46 (FDEMKTALDLRSKSGIHRLIT). Active-site for autocatalytic cleavage activity residues include S162 and K200.

Belongs to the peptidase S24 family. In terms of assembly, homodimer.

The catalysed reaction is Hydrolysis of Ala-|-Gly bond in repressor LexA.. Represses a number of genes involved in the response to DNA damage (SOS response), including recA and lexA. In the presence of single-stranded DNA, RecA interacts with LexA causing an autocatalytic cleavage which disrupts the DNA-binding part of LexA, leading to derepression of the SOS regulon and eventually DNA repair. This Ruegeria sp. (strain TM1040) (Silicibacter sp.) protein is LexA repressor.